We begin with the raw amino-acid sequence, 250 residues long: tRNA (guanine-N(1)-)-methyltransferase (250 aa).

S-adenosyl-L-methionine contacts are provided by residues Gly-115 and 135 to 140 (LGDFVL).

This sequence belongs to the RNA methyltransferase TrmD family. Homodimer.

Its subcellular location is the cytoplasm. The enzyme catalyses guanosine(37) in tRNA + S-adenosyl-L-methionine = N(1)-methylguanosine(37) in tRNA + S-adenosyl-L-homocysteine + H(+). Specifically methylates guanosine-37 in various tRNAs. This is tRNA (guanine-N(1)-)-methyltransferase from Legionella pneumophila (strain Paris).